The sequence spans 120 residues: Large ribosomal subunit protein bL17 (120 aa).

The protein belongs to the bacterial ribosomal protein bL17 family. In terms of assembly, part of the 50S ribosomal subunit. Contacts protein L32.

In Geobacillus kaustophilus (strain HTA426), this protein is Large ribosomal subunit protein bL17.